The primary structure comprises 333 residues: MEERLVSGDVHREDVSLEYSLRPKFLHEYIGQDKVKDNLKVFIEAAKMREETLDHVLLYGPPGLGKTTLAAIIANEMGVHLRTTSGPAIERPGDLAAILTSLEPGDVLFIDEIHRLHRSVEEVLYPAMEDYCLDIIIGKGQTARSIRIDLPPFTLVGATTRAGALSAPLRDRFGVISRLEYYTTEHLTQIVMRTAEILHVDITAEAAVEIARRSRGTPRIANRLLRRVRDFAQVRGDGTITFLLAKEALELLQVDRLGLDHIDHKLIKAIMEKFGGGPVGIDTIAATIGEEAQTIEDVYEPYLLQIGFLQRTPRGRIVTPIAYEHFGMEVPKQ.

The segment at 1–182 (MEERLVSGDV…FGVISRLEYY (182 aa)) is large ATPase domain (RuvB-L). ATP-binding positions include L21, R22, G63, K66, T67, T68, 129–131 (EDY), R172, Y182, and R219. T67 is a binding site for Mg(2+). The interval 183–253 (TTEHLTQIVM…LAKEALELLQ (71 aa)) is small ATPAse domain (RuvB-S). The segment at 256 to 333 (RLGLDHIDHK…EHFGMEVPKQ (78 aa)) is head domain (RuvB-H). DNA-binding residues include R311 and R316.

The protein belongs to the RuvB family. Homohexamer. Forms an RuvA(8)-RuvB(12)-Holliday junction (HJ) complex. HJ DNA is sandwiched between 2 RuvA tetramers; dsDNA enters through RuvA and exits via RuvB. An RuvB hexamer assembles on each DNA strand where it exits the tetramer. Each RuvB hexamer is contacted by two RuvA subunits (via domain III) on 2 adjacent RuvB subunits; this complex drives branch migration. In the full resolvosome a probable DNA-RuvA(4)-RuvB(12)-RuvC(2) complex forms which resolves the HJ.

It localises to the cytoplasm. It catalyses the reaction ATP + H2O = ADP + phosphate + H(+). Functionally, the RuvA-RuvB-RuvC complex processes Holliday junction (HJ) DNA during genetic recombination and DNA repair, while the RuvA-RuvB complex plays an important role in the rescue of blocked DNA replication forks via replication fork reversal (RFR). RuvA specifically binds to HJ cruciform DNA, conferring on it an open structure. The RuvB hexamer acts as an ATP-dependent pump, pulling dsDNA into and through the RuvAB complex. RuvB forms 2 homohexamers on either side of HJ DNA bound by 1 or 2 RuvA tetramers; 4 subunits per hexamer contact DNA at a time. Coordinated motions by a converter formed by DNA-disengaged RuvB subunits stimulates ATP hydrolysis and nucleotide exchange. Immobilization of the converter enables RuvB to convert the ATP-contained energy into a lever motion, pulling 2 nucleotides of DNA out of the RuvA tetramer per ATP hydrolyzed, thus driving DNA branch migration. The RuvB motors rotate together with the DNA substrate, which together with the progressing nucleotide cycle form the mechanistic basis for DNA recombination by continuous HJ branch migration. Branch migration allows RuvC to scan DNA until it finds its consensus sequence, where it cleaves and resolves cruciform DNA. The protein is Holliday junction branch migration complex subunit RuvB of Geobacillus sp. (strain WCH70).